A 98-amino-acid chain; its full sequence is Small ribosomal subunit protein uS19 (98 aa).

Positions 77-98 are disordered; the sequence is TRTYRGHAGGKSEKGGSAPRKK.

The protein belongs to the universal ribosomal protein uS19 family.

Protein S19 forms a complex with S13 that binds strongly to the 16S ribosomal RNA. This is Small ribosomal subunit protein uS19 from Chlorobium phaeobacteroides (strain BS1).